Consider the following 848-residue polypeptide: Trimethylamine-N-oxide reductase 1 (848 aa).

A signal peptide (tat-type signal) is located at residues 1–39 (MNNNDLFQASRRRFLAQLGGLTVAGMLGTSLLTPRRATA). A Mo-bis(molybdopterin guanine dinucleotide)-binding site is contributed by S191.

Belongs to the prokaryotic molybdopterin-containing oxidoreductase family. Mo-bis(molybdopterin guanine dinucleotide) is required as a cofactor. Predicted to be exported by the Tat system. The position of the signal peptide cleavage has not been experimentally proven.

It localises to the periplasm. It catalyses the reaction trimethylamine + 2 Fe(III)-[cytochrome c] + H2O = trimethylamine N-oxide + 2 Fe(II)-[cytochrome c] + 3 H(+). Reduces trimethylamine-N-oxide (TMAO) into trimethylamine; an anaerobic reaction coupled to energy-yielding reactions. The sequence is that of Trimethylamine-N-oxide reductase 1 (torA) from Escherichia coli O6:H1 (strain CFT073 / ATCC 700928 / UPEC).